We begin with the raw amino-acid sequence, 502 residues long: ATP synthase subunit alpha (502 aa).

169–176 (GDRQTGKT) provides a ligand contact to ATP.

Belongs to the ATPase alpha/beta chains family. F-type ATPases have 2 components, CF(1) - the catalytic core - and CF(0) - the membrane proton channel. CF(1) has five subunits: alpha(3), beta(3), gamma(1), delta(1), epsilon(1). CF(0) has three main subunits: a(1), b(2) and c(9-12). The alpha and beta chains form an alternating ring which encloses part of the gamma chain. CF(1) is attached to CF(0) by a central stalk formed by the gamma and epsilon chains, while a peripheral stalk is formed by the delta and b chains.

The protein resides in the cell membrane. It catalyses the reaction ATP + H2O + 4 H(+)(in) = ADP + phosphate + 5 H(+)(out). Produces ATP from ADP in the presence of a proton gradient across the membrane. The alpha chain is a regulatory subunit. This chain is ATP synthase subunit alpha, found in Bacillus sp. (strain PS3).